The following is a 435-amino-acid chain: 3-ketoacyl-CoA thiolase (435 aa).

Cysteine 98 serves as the catalytic Acyl-thioester intermediate. Residues histidine 391 and cysteine 421 each act as proton acceptor in the active site.

Belongs to the thiolase-like superfamily. Thiolase family. As to quaternary structure, heterotetramer of two alpha chains (FadJ) and two beta chains (FadI).

Its subcellular location is the cytoplasm. The catalysed reaction is an acyl-CoA + acetyl-CoA = a 3-oxoacyl-CoA + CoA. It functions in the pathway lipid metabolism; fatty acid beta-oxidation. Functionally, catalyzes the final step of fatty acid oxidation in which acetyl-CoA is released and the CoA ester of a fatty acid two carbons shorter is formed. The polypeptide is 3-ketoacyl-CoA thiolase (Vibrio parahaemolyticus serotype O3:K6 (strain RIMD 2210633)).